A 377-amino-acid chain; its full sequence is uncharacterized protein (377 aa).

10 consecutive transmembrane segments (helical) span residues 4 to 24 (LLTP…LLGT), 41 to 61 (ASFG…FPIT), 85 to 105 (IAAL…FLFG), 134 to 154 (FHAM…IATV), 159 to 179 (VYVH…PFLL), 192 to 212 (GAVG…IALA), 278 to 298 (VFGI…AGFV), 301 to 321 (GVGY…DLVV), 327 to 347 (IASV…AIGL), and 356 to 376 (LCFF…PVLK).

To R.meliloti MosC.

It is found in the cell membrane. Functionally, could be involved in a transport system. This is an uncharacterized protein from Sinorhizobium fredii (strain NBRC 101917 / NGR234).